Reading from the N-terminus, the 259-residue chain is L-ornithine N(alpha)-acyltransferase (259 aa).

Belongs to the acetyltransferase family. OlsB subfamily.

It catalyses the reaction a (3R)-hydroxyacyl-[ACP] + L-ornithine = a lyso-ornithine lipid + holo-[ACP] + H(+). The protein operates within lipid metabolism. Functionally, catalyzes the first step in the biosynthesis of ornithine lipids, which are phosphorus-free membrane lipids. Catalyzes the 3-hydroxyacyl-acyl carrier protein-dependent acylation of ornithine to form lyso-ornithine lipid (LOL). This Rhodobacter capsulatus (strain ATCC BAA-309 / NBRC 16581 / SB1003) protein is L-ornithine N(alpha)-acyltransferase.